The following is a 93-amino-acid chain: Corticostatin 1 (93 aa).

The signal sequence occupies residues 1-19 (MRTLILLAAILLAALQAQA). Positions 20 to 59 (ELFSVNVDEVLDQQQPGSDQDLVIHLTGEESSALQVPDTK) are excised as a propeptide. 3 cysteine pairs are disulfide-bonded: cysteine 62–cysteine 90, cysteine 64–cysteine 79, and cysteine 69–cysteine 89.

It belongs to the alpha-defensin family.

The protein resides in the secreted. In terms of biological role, microbicidal activity and inhibits corticotropin (ACTH) stimulated corticosterone production. This is Corticostatin 1 from Oryctolagus cuniculus (Rabbit).